A 397-amino-acid chain; its full sequence is RNA pseudouridine synthase 5 (397 aa).

An S4 RNA-binding domain is found at 64–114; it reads APLPGWIKRIRDGQITVDGEVATDPDMILREGSKLVYHRLPWQEPFAPHLL.

This sequence belongs to the pseudouridine synthase RluA family.

The catalysed reaction is a uridine in RNA = a pseudouridine in RNA. This chain is RNA pseudouridine synthase 5, found in Oryza sativa subsp. japonica (Rice).